The sequence spans 290 residues: Nucleotide-binding protein Clos_0574 (290 aa).

Residue 8–15 (GLSGAGKS) participates in ATP binding. 59–62 (DIRG) contributes to the GTP binding site.

This sequence belongs to the RapZ-like family.

Its function is as follows. Displays ATPase and GTPase activities. The protein is Nucleotide-binding protein Clos_0574 of Alkaliphilus oremlandii (strain OhILAs) (Clostridium oremlandii (strain OhILAs)).